Reading from the N-terminus, the 306-residue chain is Non-specific ribonucleoside hydrolase RihC (306 aa).

H235 is a catalytic residue.

The protein belongs to the IUNH family. RihC subfamily.

Functionally, hydrolyzes both purine and pyrimidine ribonucleosides with a broad-substrate specificity. In Salmonella typhi, this protein is Non-specific ribonucleoside hydrolase RihC.